A 77-amino-acid chain; its full sequence is Acyl carrier protein (77 aa).

The Carrier domain maps to 2–77 (SDIADRVKKI…DAVKFISEAA (76 aa)). An O-(pantetheine 4'-phosphoryl)serine modification is found at Ser-37.

Belongs to the acyl carrier protein (ACP) family. Post-translationally, 4'-phosphopantetheine is transferred from CoA to a specific serine of apo-ACP by AcpS. This modification is essential for activity because fatty acids are bound in thioester linkage to the sulfhydryl of the prosthetic group.

It is found in the cytoplasm. Its pathway is lipid metabolism; fatty acid biosynthesis. In terms of biological role, carrier of the growing fatty acid chain in fatty acid biosynthesis. This is Acyl carrier protein from Cereibacter sphaeroides (strain ATCC 17029 / ATH 2.4.9) (Rhodobacter sphaeroides).